The following is a 123-amino-acid chain: Large ribosomal subunit protein uL24 (123 aa).

The segment at 100 to 123 is disordered; sequence RRPDGSTYKAERSVRISRKTGKEI.

It belongs to the universal ribosomal protein uL24 family. As to quaternary structure, part of the 50S ribosomal subunit.

Functionally, one of two assembly initiator proteins, it binds directly to the 5'-end of the 23S rRNA, where it nucleates assembly of the 50S subunit. One of the proteins that surrounds the polypeptide exit tunnel on the outside of the subunit. This is Large ribosomal subunit protein uL24 from Nocardioides sp. (strain ATCC BAA-499 / JS614).